Reading from the N-terminus, the 963-residue chain is VPS35 endosomal protein-sorting factor-like (963 aa).

The segment at 43 to 112 (SKTKKVSRKG…DKDENSFVGP (70 aa)) is disordered. Positions 51–72 (KGSTSSTSSSSSSSVIDPLSSV) are enriched in low complexity. Phosphoserine is present on Ser-265. The helical transmembrane segment at 699–719 (AFVRACVAYCFITIPSLVGIF) threads the bilayer.

This sequence belongs to the VPS35L family. As to quaternary structure, component of the heterotrimeric retriever complex formed by VPS26C, VPS29 and VPS35L. Interacts with VPS29. Interacts with COMMD1, CCDC93 and CCDC22; associates with the CCC (COMMD/CCDC22/CCDC93) complex which contains at least COMMD1 (and possibly other COMM domain-containing proteins), CCDC22 and CCDC93. Interacts with WASHC1, WASHC2A and WASHC2C. Interacts with SNX17 and SNX31.

The protein resides in the membrane. Its subcellular location is the endosome. Functionally, acts as a component of the retriever complex. The retriever complex is a heterotrimeric complex related to retromer cargo-selective complex (CSC) and essential for retromer-independent retrieval and recycling of numerous cargos such as integrin alpha-5/beta-1 (ITGA5:ITGB1). The recruitment of the retriever complex to the endosomal membrane involves CCC and WASH complexes. In the endosomes, drives the retrieval and recycling of NxxY-motif-containing cargo proteins by coupling to SNX17, a cargo essential for the homeostatic maintenance of numerous cell surface proteins associated with processes that include cell migration, cell adhesion, nutrient supply and cell signaling. Involved in copper-dependent ATP7A trafficking between the trans-Golgi network and vesicles in the cell periphery; the function is proposed to depend on its association with the CCC complex and cooperation with the WASH complex on early endosomes. Seems not to be required for CCC complex stability. The protein is VPS35 endosomal protein-sorting factor-like of Mus musculus (Mouse).